We begin with the raw amino-acid sequence, 319 residues long: Lambda-crystallin (319 aa).

Position 2 is an N-acetylalanine (A2). A Phosphoserine modification is found at S3. NAD(+)-binding positions include 16–17, D36, E97, and K102; that span reads LV. S111 is modified (phosphoserine).

This sequence belongs to the 3-hydroxyacyl-CoA dehydrogenase family. As to quaternary structure, homodimer. As to expression, detected in eye lens, kidney, liver, heart, lung, brain and testis.

It is found in the cytoplasm. It carries out the reaction L-gulonate + NAD(+) = 3-dehydro-L-gulonate + NADH + H(+). Its activity is regulated as follows. Inhibited by malonate and by inorganic phosphate. In terms of biological role, functions as a crystallin in the rabbit eye lens. Has high L-gulonate 3-dehydrogenase activity. It also exhibits low dehydrogenase activity toward L-3-hydroxybutyrate (HBA) and L-threonate. The sequence is that of Lambda-crystallin (CRYL1) from Oryctolagus cuniculus (Rabbit).